A 353-amino-acid chain; its full sequence is Ig alpha-1 chain C region (353 aa).

An Ig-like 1 domain is found at 6–98 (PKVFPLSLCS…HYTNPSQDVT (93 aa)). 2 disulfide bridges follow: C26–C85 and C77–C101. Residues 96–121 (DVTVPCRVPSTPPTPSPSTPPTPSPP) form a disordered region. The span at 105–121 (STPPTPSPSTPPTPSPP) shows a compositional bias: pro residues. Intrachain disulfides connect C123–C180, C147–C204, and C250–C313. Ig-like domains lie at 125–220 (PRLS…ATLS) and 228–330 (PEVH…KTID). The N-linked (GlcNAc...) asparagine glycan is linked to N144. N340 is a glycosylation site (N-linked (GlcNAc...) asparagine). C352 provides a ligand contact to 3-hydroxy-L-kynurenine.

In terms of assembly, monomeric or polymeric. In terms of processing, 3-Hydroxykynurenine, an oxidized tryptophan metabolite that is common in biological fluids, reacts with alpha-1-microglobulin to form heterogeneous polycyclic chromophores including hydroxanthommatin. The chromophore reacts with accessible cysteines forming non-reducible thioether cross-links with Ig alpha-1 chain C region Cys-352.

In terms of biological role, ig alpha is the major immunoglobulin class in body secretions. It may serve both to defend against local infection and to prevent access of foreign antigens to the general immunologic system. The chain is Ig alpha-1 chain C region (IGHA1) from Gorilla gorilla gorilla (Western lowland gorilla).